We begin with the raw amino-acid sequence, 271 residues long: MWELRSIAFSRAVFAEFLATLLFVFFGLGSALNWPQALPSVLQIAMAFGLGIGTLVQALGHISGAHINPAVTVACLVGCHVSVLRAAFYVAAQLLGAVAGAALLHEITPADIRGDLAVNALSNSTTAGQAVTVELFLTLQLVLCIFASTDERRGENPGTPALSIGFSVALGHLLGIHYTGCSMNPARSLAPAVVTGKFDDHWVFWIGPLVGAILGSLLYNYVLFPPAKSLSERLAVLKGLEPDTDWEEREVRRRQSVELHSPQSLPRGTKA.

At M1–R11 the chain is on the cytoplasmic side. The helical transmembrane segment at A12 to L32 threads the bilayer. The Extracellular segment spans residues N33–S40. Residues V41–L59 form a helical membrane-spanning segment. Topologically, residues G60–G64 are cytoplasmic. Positions A65–A74 form an intramembrane region, discontinuously helical. The NPA 1 signature appears at N68–A70. Residues C75–R85 lie on the Cytoplasmic side of the membrane. The helical transmembrane segment at A86–I107 threads the bilayer. Residues T108 to A127 lie on the Extracellular side of the membrane. N123 carries an N-linked (GlcNAc...) asparagine glycan. The helical transmembrane segment at G128–S148 threads the bilayer. Over T149–N156 the chain is Cytoplasmic. Residues P157–I176 traverse the membrane as a helical segment. The Extracellular segment spans residues H177–G180. The segment at residues C181–V193 is an intramembrane region (discontinuously helical). Positions N184–A186 match the NPA 2 motif. The Extracellular segment spans residues V194 to H201. Residues W202–V222 form a helical membrane-spanning segment. Topologically, residues L223–A271 are cytoplasmic. The segment at E248–A271 is disordered. Phosphoserine; by PKA is present on S256. Polar residues predominate over residues S261–A271.

This sequence belongs to the MIP/aquaporin (TC 1.A.8) family. As to quaternary structure, homotetramer. Interacts with micropeptide MIAC; the interaction leads to a reduction of filamentous actin fibers and inhibition of the EREG/EGFR signaling pathway. Post-translationally, ser-256 phosphorylation is necessary and sufficient for expression at the apical membrane. Endocytosis is not phosphorylation-dependent. In terms of processing, N-glycosylated. As to expression, expressed in collecting tubules in kidney medulla (at protein level). Detected in kidney.

It localises to the apical cell membrane. The protein resides in the basolateral cell membrane. It is found in the cell membrane. The protein localises to the cytoplasmic vesicle membrane. Its subcellular location is the golgi apparatus. It localises to the trans-Golgi network membrane. It carries out the reaction H2O(in) = H2O(out). It catalyses the reaction glycerol(in) = glycerol(out). In terms of biological role, forms a water-specific channel that provides the plasma membranes of renal collecting duct with high permeability to water, thereby permitting water to move in the direction of an osmotic gradient. Plays an essential role in renal water homeostasis. Could also be permeable to glycerol. This Homo sapiens (Human) protein is Aquaporin-2.